Consider the following 547-residue polypeptide: Undecaprenyl phosphate-alpha-4-amino-4-deoxy-L-arabinose arabinosyl transferase (547 aa).

10 helical membrane passes run 83-103, 111-131, 174-194, 205-225, 253-273, 286-306, 311-331, 346-366, 378-398, and 408-428; these read FASAAATGLSALLIFWFALQL, FLASLIYLSLLIVYGIGTYSV, FLTKGFIALAVPVVVIVPYVI, FGPLAILSAVLLAAPWAIAVH, APFWYYLPMGLLGTLPWLGLL, ISPETLYLLAWVILPLLFFSI, LLTYILPCFAPLAMLMAANAV, AWLNGLFGLICLVVLAVLAFS, GALAVAMVIFAGWSLLGFIQL, and SALCPMVLAIGLPWALPQSLI.

Belongs to the glycosyltransferase 83 family.

Its subcellular location is the cell inner membrane. The enzyme catalyses 4-amino-4-deoxy-alpha-L-arabinopyranosyl di-trans,octa-cis-undecaprenyl phosphate + lipid IVA = lipid IIA + di-trans,octa-cis-undecaprenyl phosphate.. Its pathway is lipopolysaccharide metabolism; 4-amino-4-deoxy-beta-L-arabinose-lipid A biosynthesis. Catalyzes the transfer of the L-Ara4N moiety of the glycolipid undecaprenyl phosphate-alpha-L-Ara4N to lipid A. The modified arabinose is attached to lipid A and is required for resistance to polymyxin and cationic antimicrobial peptides. The chain is Undecaprenyl phosphate-alpha-4-amino-4-deoxy-L-arabinose arabinosyl transferase from Aeromonas hydrophila subsp. hydrophila (strain ATCC 7966 / DSM 30187 / BCRC 13018 / CCUG 14551 / JCM 1027 / KCTC 2358 / NCIMB 9240 / NCTC 8049).